The chain runs to 122 residues: Prefoldin subunit 1 (122 aa).

An N-acetylalanine modification is found at A2.

Belongs to the prefoldin subunit beta family. As to quaternary structure, heterohexamer of two PFD-alpha type and four PFD-beta type subunits.

Binds specifically to cytosolic chaperonin (c-CPN) and transfers target proteins to it. Binds to nascent polypeptide chain and promotes folding in an environment in which there are many competing pathways for nonnative proteins. The sequence is that of Prefoldin subunit 1 (PFDN1) from Pongo abelii (Sumatran orangutan).